A 109-amino-acid chain; its full sequence is Small ribosomal subunit protein bS20 (109 aa).

It belongs to the bacterial ribosomal protein bS20 family.

Binds directly to 16S ribosomal RNA. The sequence is that of Small ribosomal subunit protein bS20 from Synechococcus sp. (strain JA-2-3B'a(2-13)) (Cyanobacteria bacterium Yellowstone B-Prime).